The chain runs to 520 residues: Maturase K (520 aa).

The protein belongs to the intron maturase 2 family. MatK subfamily.

It is found in the plastid. It localises to the chloroplast. In terms of biological role, usually encoded in the trnK tRNA gene intron. Probably assists in splicing its own and other chloroplast group II introns. The protein is Maturase K of Iris cristata (Dwarf crested iris).